A 534-amino-acid polypeptide reads, in one-letter code: Cytochrome P450 monooxygenase btcB (534 aa).

N-linked (GlcNAc...) asparagine glycosylation occurs at N20. A helical transmembrane segment spans residues 41 to 61; it reads ALAFLCGALLFGFVYSVFYNL. Residues N335, N413, and N431 are each glycosylated (N-linked (GlcNAc...) asparagine). A heme-binding site is contributed by C484.

It belongs to the cytochrome P450 family. Heme is required as a cofactor.

It localises to the membrane. It participates in secondary metabolite biosynthesis; terpenoid biosynthesis. Functionally, cytochrome P4590 monooxygenase part of the gene cluster that mediates the biosynthesis of betaestacins. The bifunctional terpene synthase btcA converts isopentenyl diphosphate (IPP) and dimethylallyl diphosphate (DMAPP) into the sesterterpene betaestacin I. The C-terminal prenyltransferase (PT) domain of btcA catalyzes formation of GFPP, whereas the N-terminal terpene cyclase (TC) domain catalyzes the cyclization of GFPP into betaestacin I. The cytochrome P450 monooxygenase btcB oxidizes the C25 methyl group of betaestacin I to yield the carboxylic acid betaestacin IV via the alcohol betaestacin III. The cytochrome P450 monooxygenase btcC further catalyzes the multistep oxidation of betaestacin IV to produce several compounds, including betaestacins Va, Vb, Vc and VI. The polypeptide is Cytochrome P450 monooxygenase btcB (Colletotrichum orbiculare (strain 104-T / ATCC 96160 / CBS 514.97 / LARS 414 / MAFF 240422) (Cucumber anthracnose fungus)).